The chain runs to 342 residues: Ribosomal RNA small subunit methyltransferase C (342 aa).

Belongs to the methyltransferase superfamily. RsmC family. Monomer.

It localises to the cytoplasm. It carries out the reaction guanosine(1207) in 16S rRNA + S-adenosyl-L-methionine = N(2)-methylguanosine(1207) in 16S rRNA + S-adenosyl-L-homocysteine + H(+). In terms of biological role, specifically methylates the guanine in position 1207 of 16S rRNA in the 30S particle. The sequence is that of Ribosomal RNA small subunit methyltransferase C from Shewanella sp. (strain MR-4).